A 225-amino-acid polypeptide reads, in one-letter code: MMYHIPGVLSPQDVARFREQLEQAEWVDGRVTTGAQGAQVKNNQQVDTRSTLYAALQNEVLNAVNQHALFFAAALPRTLSTPLFNRYQNNETYGFHVDGAVRSHPQNGWMRTDLSATLFLSDPQSYDGGELVVNDTFGQHRVKLPAGDLVLYPSSSQHCVPPVTRGVRVASFMWIQSMIRDDKKRAMLFELDNNIQSLKSRYGESEEILSLLNLYHNLLREWSEI.

One can recognise a Fe2OG dioxygenase domain in the interval 78 to 177; that stretch reads TLSTPLFNRY…RVASFMWIQS (100 aa). Residues His-96, Asp-98, and His-158 each coordinate Fe cation. Arg-168 contacts 2-oxoglutarate.

The cofactor is Fe(2+). L-ascorbate serves as cofactor.

The protein is PKHD-type hydroxylase YbiX of Shigella sonnei (strain Ss046).